A 76-amino-acid chain; its full sequence is Small ribosomal subunit protein bS16 (76 aa).

This sequence belongs to the bacterial ribosomal protein bS16 family.

The protein is Small ribosomal subunit protein bS16 of Sulfurovum sp. (strain NBC37-1).